A 93-amino-acid polypeptide reads, in one-letter code: Small ribosomal subunit protein uS19c (93 aa).

Belongs to the universal ribosomal protein uS19 family.

The protein resides in the plastid. Its subcellular location is the chloroplast. Functionally, protein S19 forms a complex with S13 that binds strongly to the 16S ribosomal RNA. This chain is Small ribosomal subunit protein uS19c, found in Zygnema circumcarinatum (Green alga).